The primary structure comprises 419 residues: Subtilisin-like protease 2 (419 aa).

Residues 1-16 (MQLLNFGLLLLPFVAG) form the signal peptide. Residues 17 to 122 (DLAPQPEPLL…VHPDQHVYLA (106 aa)) constitute a propeptide that is removed on maturation. One can recognise an Inhibitor I9 domain in the interval 36–122 (QYIVTLKEGL…VHPDQHVYLA (87 aa)). One can recognise a Peptidase S8 domain in the interval 131–419 (RWGLGYMSSK…IQERKFKLPK (289 aa)). Residues D169 and H201 each act as charge relay system in the active site. N-linked (GlcNAc...) asparagine glycosylation is found at N248, N261, and N348. S357 acts as the Charge relay system in catalysis. An N-linked (GlcNAc...) asparagine glycan is attached at N388.

Belongs to the peptidase S8 family.

The protein resides in the secreted. Secreted subtilisin-like serine protease with keratinolytic activity that contributes to pathogenicity. This Trichophyton verrucosum (Cattle ringworm fungus) protein is Subtilisin-like protease 2 (SUB2).